The chain runs to 750 residues: GTP pyrophosphokinase rsh (750 aa).

Positions 45-144 constitute an HD domain; that stretch reads YFSHPLEVAA…VKLADRLHNM (100 aa). Positions 390–451 constitute a TGS domain; it reads DQVFCFTPKG…KNGDEVDIIR (62 aa). The interval 587–613 is disordered; the sequence is AAKVDPAATTPKPGKRALPIRGTNPDL. Positions 676–750 constitute an ACT domain; the sequence is RISVSAINSP…SVSSAKRVNG (75 aa).

Belongs to the RelA/SpoT family.

It carries out the reaction GTP + ATP = guanosine 3'-diphosphate 5'-triphosphate + AMP. Its function is as follows. Functions as a (p)ppGpp synthase. In eubacteria ppGpp (guanosine 3'-diphosphate 5'-diphosphate) is a mediator of the stringent response that coordinates a variety of cellular activities in response to changes in nutritional abundance. It is necessary for persistence in mice, essential for intracellular growth of Brucella and required for expression of the type IV secretion system VirB and therefore plays a role in adaptation of Brucella to its intracellular host environment. This is GTP pyrophosphokinase rsh (rsh) from Brucella melitensis biotype 1 (strain ATCC 23456 / CCUG 17765 / NCTC 10094 / 16M).